The following is a 475-amino-acid chain: Aspartyl/glutamyl-tRNA(Asn/Gln) amidotransferase subunit B (475 aa).

Belongs to the GatB/GatE family. GatB subfamily. In terms of assembly, heterotrimer of A, B and C subunits.

It carries out the reaction L-glutamyl-tRNA(Gln) + L-glutamine + ATP + H2O = L-glutaminyl-tRNA(Gln) + L-glutamate + ADP + phosphate + H(+). The enzyme catalyses L-aspartyl-tRNA(Asn) + L-glutamine + ATP + H2O = L-asparaginyl-tRNA(Asn) + L-glutamate + ADP + phosphate + 2 H(+). In terms of biological role, allows the formation of correctly charged Asn-tRNA(Asn) or Gln-tRNA(Gln) through the transamidation of misacylated Asp-tRNA(Asn) or Glu-tRNA(Gln) in organisms which lack either or both of asparaginyl-tRNA or glutaminyl-tRNA synthetases. The reaction takes place in the presence of glutamine and ATP through an activated phospho-Asp-tRNA(Asn) or phospho-Glu-tRNA(Gln). The chain is Aspartyl/glutamyl-tRNA(Asn/Gln) amidotransferase subunit B from Thiobacillus denitrificans (strain ATCC 25259 / T1).